Consider the following 304-residue polypeptide: UDP-N-acetylenolpyruvoylglucosamine reductase (304 aa).

Residues 34–198 enclose the FAD-binding PCMH-type domain; the sequence is IGGKADFLVW…LEVVFALQPG (165 aa). The active site involves Arg177. The active-site Proton donor is the Ser227. The active site involves Glu297.

Belongs to the MurB family. The cofactor is FAD.

Its subcellular location is the cytoplasm. It carries out the reaction UDP-N-acetyl-alpha-D-muramate + NADP(+) = UDP-N-acetyl-3-O-(1-carboxyvinyl)-alpha-D-glucosamine + NADPH + H(+). Its pathway is cell wall biogenesis; peptidoglycan biosynthesis. Functionally, cell wall formation. This Geobacillus thermodenitrificans (strain NG80-2) protein is UDP-N-acetylenolpyruvoylglucosamine reductase.